Consider the following 150-residue polypeptide: Transcriptional repressor NrdR (150 aa).

Positions 1-22 are disordered; the sequence is MKCPYCSAPDSRVVNSRPSDDG. A zinc finger lies at 3–34; sequence CPYCSAPDSRVVNSRPSDDGASIRRRRECLRC. In terms of domain architecture, ATP-cone spans 49–136; sequence LMVLKRGGQR…VYRDFDSLER (88 aa).

This sequence belongs to the NrdR family. The cofactor is Zn(2+).

Functionally, negatively regulates transcription of bacterial ribonucleotide reductase nrd genes and operons by binding to NrdR-boxes. The sequence is that of Transcriptional repressor NrdR from Deinococcus geothermalis (strain DSM 11300 / CIP 105573 / AG-3a).